The sequence spans 80 residues: Acyl carrier protein (80 aa).

The 76-residue stretch at 4–79 (EAILEKVRSI…DAVKYIEEKQ (76 aa)) folds into the Carrier domain. Position 39 is an O-(pantetheine 4'-phosphoryl)serine (serine 39).

It belongs to the acyl carrier protein (ACP) family. In terms of processing, 4'-phosphopantetheine is transferred from CoA to a specific serine of apo-ACP by AcpS. This modification is essential for activity because fatty acids are bound in thioester linkage to the sulfhydryl of the prosthetic group.

Its subcellular location is the cytoplasm. Its pathway is lipid metabolism; fatty acid biosynthesis. Its function is as follows. Carrier of the growing fatty acid chain in fatty acid biosynthesis. The chain is Acyl carrier protein from Prochlorococcus marinus (strain NATL1A).